Consider the following 234-residue polypeptide: UPF0758 protein Rfer_3252 (234 aa).

Residues 112–234 (IFATPDAVKH…ALSMAERGLL (123 aa)) enclose the MPN domain. His183, His185, and Asp196 together coordinate Zn(2+). The JAMM motif signature appears at 183-196 (HNHPSGTVQPSRAD).

The protein belongs to the UPF0758 family.

The sequence is that of UPF0758 protein Rfer_3252 from Albidiferax ferrireducens (strain ATCC BAA-621 / DSM 15236 / T118) (Rhodoferax ferrireducens).